Reading from the N-terminus, the 162-residue chain is Shikimate kinase (162 aa).

11–16 (GSGKSS) lines the ATP pocket. Position 15 (serine 15) interacts with Mg(2+). Residues aspartate 33, arginine 57, and glycine 80 each coordinate substrate. ATP is bound at residue arginine 116. Residue arginine 132 participates in substrate binding.

Belongs to the shikimate kinase family. Monomer. It depends on Mg(2+) as a cofactor.

It is found in the cytoplasm. The enzyme catalyses shikimate + ATP = 3-phosphoshikimate + ADP + H(+). It functions in the pathway metabolic intermediate biosynthesis; chorismate biosynthesis; chorismate from D-erythrose 4-phosphate and phosphoenolpyruvate: step 5/7. Its function is as follows. Catalyzes the specific phosphorylation of the 3-hydroxyl group of shikimic acid using ATP as a cosubstrate. This chain is Shikimate kinase, found in Helicobacter pylori (strain J99 / ATCC 700824) (Campylobacter pylori J99).